Consider the following 125-residue polypeptide: Small ribosomal subunit protein uS12 (125 aa).

D89 is modified (3-methylthioaspartic acid). Residues 106–125 (GVKDRKQSRSKYGAKRPKKA) form a disordered region. The segment covering 113-125 (SRSKYGAKRPKKA) has biased composition (basic residues).

This sequence belongs to the universal ribosomal protein uS12 family. As to quaternary structure, part of the 30S ribosomal subunit. Contacts proteins S8 and S17. May interact with IF1 in the 30S initiation complex.

Its function is as follows. With S4 and S5 plays an important role in translational accuracy. Functionally, interacts with and stabilizes bases of the 16S rRNA that are involved in tRNA selection in the A site and with the mRNA backbone. Located at the interface of the 30S and 50S subunits, it traverses the body of the 30S subunit contacting proteins on the other side and probably holding the rRNA structure together. The combined cluster of proteins S8, S12 and S17 appears to hold together the shoulder and platform of the 30S subunit. The sequence is that of Small ribosomal subunit protein uS12 from Aromatoleum aromaticum (strain DSM 19018 / LMG 30748 / EbN1) (Azoarcus sp. (strain EbN1)).